A 225-amino-acid chain; its full sequence is ATP phosphoribosyltransferase (225 aa).

It belongs to the ATP phosphoribosyltransferase family. Short subfamily. Heteromultimer composed of HisG and HisZ subunits.

It is found in the cytoplasm. The catalysed reaction is 1-(5-phospho-beta-D-ribosyl)-ATP + diphosphate = 5-phospho-alpha-D-ribose 1-diphosphate + ATP. Its pathway is amino-acid biosynthesis; L-histidine biosynthesis; L-histidine from 5-phospho-alpha-D-ribose 1-diphosphate: step 1/9. Functionally, catalyzes the condensation of ATP and 5-phosphoribose 1-diphosphate to form N'-(5'-phosphoribosyl)-ATP (PR-ATP). Has a crucial role in the pathway because the rate of histidine biosynthesis seems to be controlled primarily by regulation of HisG enzymatic activity. This chain is ATP phosphoribosyltransferase, found in Herminiimonas arsenicoxydans.